Reading from the N-terminus, the 96-residue chain is Co-chaperonin GroES (96 aa).

Belongs to the GroES chaperonin family. In terms of assembly, heptamer of 7 subunits arranged in a ring. Interacts with the chaperonin GroEL.

It localises to the cytoplasm. In terms of biological role, together with the chaperonin GroEL, plays an essential role in assisting protein folding. The GroEL-GroES system forms a nano-cage that allows encapsulation of the non-native substrate proteins and provides a physical environment optimized to promote and accelerate protein folding. GroES binds to the apical surface of the GroEL ring, thereby capping the opening of the GroEL channel. The protein is Co-chaperonin GroES of Geotalea uraniireducens (strain Rf4) (Geobacter uraniireducens).